The chain runs to 303 residues: MLSLLSSDSSLLSLLFLFLIPCLFITSYIGFPVFLLKLIGLIKIKAARDNEKRDEGTYVVREDGLQRELMPRHVAFILDGNRRWAKRAGLTTSQGHEAGAKRLIDIAELCFELGVHTVSAFAFSTENWGRDKIEIDNLMSLIQHYRNKSNIKFFHRSEVRVSVIGNKTKIPESLLKEIHEIEEATKGYKNKHLIMAVDYSGKFDIMHACKSLVKKSEKGLIREEDVDEALIERELLTNCSDFPSPDLMIRTSGEQRISNFFLWQLAYSELFFSPVFWPDFDKDKLLEALASYQRRERRFGCRV.

Residues 14 to 34 form a helical membrane-spanning segment; it reads LLFLFLIPCLFITSYIGFPVF.

The protein belongs to the UPP synthase family. It depends on Mg(2+) as a cofactor. As to expression, expressed in low levels in the whole plant. Preferentially expressed in roots.

The protein localises to the endoplasmic reticulum membrane. It carries out the reaction n isopentenyl diphosphate + (2E,6E)-farnesyl diphosphate = a di-trans,poly-cis-polyprenyl diphosphate + n diphosphate. It participates in protein modification; protein glycosylation. In terms of biological role, catalyzes cis-prenyl chain elongation to produce the polyprenyl backbone of dolichol, a glycosyl carrier-lipid required for the biosynthesis of several classes of glycoprotein. The chain is Dehydrodolichyl diphosphate synthase 1 (DPS) from Arabidopsis thaliana (Mouse-ear cress).